Consider the following 214-residue polypeptide: External core antigen (214 aa).

An N-terminal signal peptide occupies residues 1–19; it reads MQLFHLCLIISCTCPTVQA. The tract at residues 25–27 is HBEAG; the sequence is GWL. Residues 165-214 are disordered; sequence NAPILSTLPETTVVRRRDRGRSPRRRTPSPRRRRSQSPRRRRSQSRESQC. Positions 178–207 are enriched in basic residues; sequence VRRRDRGRSPRRRTPSPRRRRSQSPRRRRS. The stretch at 186 to 192 is one 1; half-length repeat; it reads SPRRRTP. The 3 X 8 AA repeats of S-P-R-R-R-R-S-Q stretch occupies residues 186-208; the sequence is SPRRRTPSPRRRRSQSPRRRRSQ. Residues 186–214 constitute a propeptide that is removed on maturation; that stretch reads SPRRRTPSPRRRRSQSPRRRRSQSRESQC. 2 tandem repeats follow at residues 193 to 200 and 201 to 208.

Belongs to the orthohepadnavirus precore antigen family. Homodimerizes. In terms of processing, phosphorylated. Post-translationally, cleaved by host furin.

Its subcellular location is the secreted. It localises to the host nucleus. Its function is as follows. May regulate immune response to the intracellular capsid in acting as a T-cell tolerogen, by having an immunoregulatory effect which prevents destruction of infected cells by cytotoxic T-cells. This immune regulation may predispose to chronicity during perinatal infections and prevent severe liver injury during adult infections. The polypeptide is External core antigen (Homo sapiens (Human)).